The chain runs to 430 residues: Histidinol dehydrogenase (430 aa).

NAD(+)-binding residues include Tyr130, Gln191, and Asn214. 3 residues coordinate substrate: Ser237, Gln259, and His262. Zn(2+) is bound by residues Gln259 and His262. Catalysis depends on proton acceptor residues Glu327 and His328. Substrate contacts are provided by His328, Asp361, Glu415, and His420. Residue Asp361 coordinates Zn(2+). His420 is a binding site for Zn(2+).

It belongs to the histidinol dehydrogenase family. It depends on Zn(2+) as a cofactor.

The catalysed reaction is L-histidinol + 2 NAD(+) + H2O = L-histidine + 2 NADH + 3 H(+). The protein operates within amino-acid biosynthesis; L-histidine biosynthesis; L-histidine from 5-phospho-alpha-D-ribose 1-diphosphate: step 9/9. Functionally, catalyzes the sequential NAD-dependent oxidations of L-histidinol to L-histidinaldehyde and then to L-histidine. The polypeptide is Histidinol dehydrogenase (Brucella melitensis biotype 1 (strain ATCC 23456 / CCUG 17765 / NCTC 10094 / 16M)).